Reading from the N-terminus, the 194-residue chain is Adenylate kinase isoenzyme 1 (194 aa).

Position 1 is an N-acetylmethionine (methionine 1). 18-23 (GSGKGT) contributes to the ATP binding site. Position 38 is a phosphoserine (serine 38). The NMP stretch occupies residues 38–67 (STGDLLRSEVSSGSARGKKLSEIMEKGQLV). AMP-binding positions include threonine 39, arginine 44, 65 to 67 (QLV), 94 to 97 (GYPR), and glutamine 101. Residues 131–141 (KRGETSGRVDD) are LID. ATP is bound at residue arginine 132. 2 residues coordinate AMP: arginine 138 and arginine 149. Glycine 177 is a binding site for ATP.

Belongs to the adenylate kinase family. AK1 subfamily. Monomer. Requires Mg(2+) as cofactor.

It is found in the cytoplasm. The catalysed reaction is a ribonucleoside 5'-phosphate + ATP = a ribonucleoside 5'-diphosphate + ADP. It carries out the reaction AMP + ATP = 2 ADP. It catalyses the reaction dAMP + ATP = dADP + ADP. The enzyme catalyses dATP + AMP = dADP + ADP. The catalysed reaction is dAMP + dATP = 2 dADP. It carries out the reaction a 2'-deoxyribonucleoside 5'-diphosphate + ATP = a 2'-deoxyribonucleoside 5'-triphosphate + ADP. It catalyses the reaction a ribonucleoside 5'-diphosphate + ATP = a ribonucleoside 5'-triphosphate + ADP. The enzyme catalyses CDP + GTP = CTP + GDP. The catalysed reaction is GDP + ATP = GTP + ADP. It carries out the reaction UDP + ATP = UTP + ADP. It catalyses the reaction GTP + UDP = UTP + GDP. The enzyme catalyses dTDP + GTP = dTTP + GDP. The catalysed reaction is dCDP + GTP = dCTP + GDP. It carries out the reaction dGDP + ATP = dGTP + ADP. It catalyses the reaction dADP + GTP = dATP + GDP. The enzyme catalyses thiamine diphosphate + ADP = thiamine triphosphate + AMP. Its function is as follows. Catalyzes the reversible transfer of the terminal phosphate group between ATP and AMP. Also displays broad nucleoside diphosphate kinase activity. Plays an important role in cellular energy homeostasis and in adenine nucleotide metabolism. Also catalyzes at a very low rate the synthesis of thiamine triphosphate (ThTP) from thiamine diphosphate (ThDP) and ADP. This is Adenylate kinase isoenzyme 1 from Homo sapiens (Human).